The following is a 286-amino-acid chain: uncharacterized protein (286 aa).

The interval 1 to 47 (MAIPFLHKGGSDDSTHHHTHDYDHHNHDHHGHDHHSHDSSSNSSSEA) is disordered. Residues 9-26 (GGSDDSTHHHTHDYDHHN) are compositionally biased toward basic and acidic residues. Residue 93-100 (GPVGSGKT) participates in GTP binding.

This sequence belongs to the SIMIBI class G3E GTPase family. UreG subfamily.

It localises to the cytoplasm. Its subcellular location is the nucleus. Probably facilitates nickel incorporation. This is an uncharacterized protein from Schizosaccharomyces pombe (strain 972 / ATCC 24843) (Fission yeast).